A 380-amino-acid polypeptide reads, in one-letter code: Flap endonuclease 1 (380 aa).

An N-domain region spans residues 1 to 104; sequence MGIQGLAKLI…GELAKRAERR (104 aa). Asp34 is a binding site for Mg(2+). DNA contacts are provided by Arg47 and Arg70. The Mg(2+) site is built by Asp86, Glu158, Glu160, Asp179, and Asp181. Residues 122–253 are I-domain; that stretch reads DVNKFQKRLV…KRAIELIRQY (132 aa). Position 158 (Glu158) interacts with DNA. Residues Gly231 and Asp233 each coordinate DNA. A Mg(2+)-binding site is contributed by Asp233. A disordered region spans residues 328–380; the sequence is LKNARHTSTQGRLDSFFKVMSSPSVKRKEPPKGAKGSASKKAKMSGGKFKKPK. The tract at residues 336-344 is interaction with PCNA; it reads TQGRLDSFF. A compositionally biased stretch (basic residues) spans 365 to 380; it reads ASKKAKMSGGKFKKPK.

The protein belongs to the XPG/RAD2 endonuclease family. FEN1 subfamily. Interacts with PCNA. Three molecules of FEN1 bind to one PCNA trimer with each molecule binding to one PCNA monomer. PCNA stimulates the nuclease activity without altering cleavage specificity. It depends on Mg(2+) as a cofactor. Post-translationally, phosphorylated. Phosphorylation upon DNA damage induces relocalization to the nuclear plasma.

The protein localises to the nucleus. The protein resides in the nucleolus. It localises to the nucleoplasm. It is found in the mitochondrion. Functionally, structure-specific nuclease with 5'-flap endonuclease and 5'-3' exonuclease activities involved in DNA replication and repair. During DNA replication, cleaves the 5'-overhanging flap structure that is generated by displacement synthesis when DNA polymerase encounters the 5'-end of a downstream Okazaki fragment. It enters the flap from the 5'-end and then tracks to cleave the flap base, leaving a nick for ligation. Also involved in the long patch base excision repair (LP-BER) pathway, by cleaving within the apurinic/apyrimidinic (AP) site-terminated flap. Acts as a genome stabilization factor that prevents flaps from equilibrating into structures that lead to duplications and deletions. Also possesses 5'-3' exonuclease activity on nicked or gapped double-stranded DNA, and exhibits RNase H activity. Also involved in replication and repair of rDNA and in repairing mitochondrial DNA. The polypeptide is Flap endonuclease 1 (Branchiostoma floridae (Florida lancelet)).